We begin with the raw amino-acid sequence, 339 residues long: Anthranilate phosphoribosyltransferase (339 aa).

5-phospho-alpha-D-ribose 1-diphosphate is bound by residues Gly80, Gly83 to Asp84, Thr88, Asn90 to Thr93, Lys108 to Ser116, and Ser120. Gly80 serves as a coordination point for anthranilate. A Mg(2+)-binding site is contributed by Ser92. Asn111 is an anthranilate binding site. Arg166 is an anthranilate binding site. Mg(2+) is bound by residues Asp225 and Glu226.

Belongs to the anthranilate phosphoribosyltransferase family. In terms of assembly, homodimer. It depends on Mg(2+) as a cofactor.

The enzyme catalyses N-(5-phospho-beta-D-ribosyl)anthranilate + diphosphate = 5-phospho-alpha-D-ribose 1-diphosphate + anthranilate. It functions in the pathway amino-acid biosynthesis; L-tryptophan biosynthesis; L-tryptophan from chorismate: step 2/5. Its function is as follows. Catalyzes the transfer of the phosphoribosyl group of 5-phosphorylribose-1-pyrophosphate (PRPP) to anthranilate to yield N-(5'-phosphoribosyl)-anthranilate (PRA). The sequence is that of Anthranilate phosphoribosyltransferase from Alkaliphilus metalliredigens (strain QYMF).